The chain runs to 280 residues: Nucleotide-binding protein CV_3336 (280 aa).

8–15 (GLSGSGKS) contacts ATP. 57–60 (DTRS) is a GTP binding site.

This sequence belongs to the RapZ-like family.

Functionally, displays ATPase and GTPase activities. This Chromobacterium violaceum (strain ATCC 12472 / DSM 30191 / JCM 1249 / CCUG 213 / NBRC 12614 / NCIMB 9131 / NCTC 9757 / MK) protein is Nucleotide-binding protein CV_3336.